The primary structure comprises 422 residues: Glutamate-1-semialdehyde 2,1-aminomutase (422 aa).

N6-(pyridoxal phosphate)lysine is present on Lys-264.

Belongs to the class-III pyridoxal-phosphate-dependent aminotransferase family. HemL subfamily. In terms of assembly, homodimer. Pyridoxal 5'-phosphate is required as a cofactor.

Its subcellular location is the cytoplasm. The catalysed reaction is (S)-4-amino-5-oxopentanoate = 5-aminolevulinate. It participates in porphyrin-containing compound metabolism; protoporphyrin-IX biosynthesis; 5-aminolevulinate from L-glutamyl-tRNA(Glu): step 2/2. This is Glutamate-1-semialdehyde 2,1-aminomutase from Clostridium tetani (strain Massachusetts / E88).